The sequence spans 285 residues: Protease HtpX homolog (285 aa).

The next 2 membrane-spanning stretches (helical) occupy residues 7–27 (TAMLMAAITALFIVIGGMIGG) and 30–50 (GMTIALLFALGMNFFSYWFSD). Histidine 131 is a Zn(2+) binding site. The active site involves glutamate 132. Histidine 135 contacts Zn(2+). 2 helical membrane passes run 146-166 (ITATMAGAISAIANFAMFFGG) and 177-197 (IAGIAVALLAPIAGALIQMAI). Glutamate 202 serves as a coordination point for Zn(2+).

Belongs to the peptidase M48B family. Zn(2+) is required as a cofactor.

Its subcellular location is the cell inner membrane. The chain is Protease HtpX homolog from Burkholderia lata (strain ATCC 17760 / DSM 23089 / LMG 22485 / NCIMB 9086 / R18194 / 383).